A 238-amino-acid polypeptide reads, in one-letter code: 7-cyano-7-deazaguanine synthase (238 aa).

An ATP-binding site is contributed by 14–24 (FSGGQDSATCL). Zn(2+)-binding residues include cysteine 202, cysteine 217, cysteine 220, and cysteine 223.

This sequence belongs to the QueC family. The cofactor is Zn(2+).

The catalysed reaction is 7-carboxy-7-deazaguanine + NH4(+) + ATP = 7-cyano-7-deazaguanine + ADP + phosphate + H2O + H(+). The protein operates within purine metabolism; 7-cyano-7-deazaguanine biosynthesis. Its function is as follows. Catalyzes the ATP-dependent conversion of 7-carboxy-7-deazaguanine (CDG) to 7-cyano-7-deazaguanine (preQ(0)). In Nitrobacter winogradskyi (strain ATCC 25391 / DSM 10237 / CIP 104748 / NCIMB 11846 / Nb-255), this protein is 7-cyano-7-deazaguanine synthase.